The sequence spans 319 residues: Probable NAD(P)H-dependent D-xylose reductase xyl1 (319 aa).

Catalysis depends on tyrosine 50, which acts as the Proton donor. Histidine 112 contacts substrate. NAD(+) is bound by residues 166-167, 215-224, and 271-281; these read SN, SSFGPLSFLE, and KSNNPTRLSQN.

The protein belongs to the aldo/keto reductase family.

The enzyme catalyses xylitol + NAD(+) = D-xylose + NADH + H(+). It catalyses the reaction xylitol + NADP(+) = D-xylose + NADPH + H(+). It functions in the pathway carbohydrate metabolism; D-xylose degradation. In terms of biological role, catalyzes the initial reaction in the xylose utilization pathway by reducing D-xylose into xylitol. Xylose is a major component of hemicelluloses such as xylan. Most fungi utilize D-xylose via three enzymatic reactions, xylose reductase (XR), xylitol dehydrogenase (XDH), and xylulokinase, to form xylulose 5-phosphate, which enters pentose phosphate pathway. This chain is Probable NAD(P)H-dependent D-xylose reductase xyl1 (xyl1), found in Aspergillus oryzae (strain ATCC 42149 / RIB 40) (Yellow koji mold).